The chain runs to 245 residues: Probable transcriptional regulatory protein MARTH_orf271 (245 aa).

It belongs to the TACO1 family.

Its subcellular location is the cytoplasm. This Metamycoplasma arthritidis (strain 158L3-1) (Mycoplasma arthritidis) protein is Probable transcriptional regulatory protein MARTH_orf271.